A 142-amino-acid polypeptide reads, in one-letter code: FAD synthase (142 aa).

Residues 9-10 (TF), 14-17 (HPGH), and Asp-92 each bind ATP.

The protein belongs to the archaeal FAD synthase family. As to quaternary structure, homodimer. A divalent metal cation serves as cofactor.

The catalysed reaction is FMN + ATP + H(+) = FAD + diphosphate. The protein operates within cofactor biosynthesis; FAD biosynthesis; FAD from FMN: step 1/1. In terms of biological role, catalyzes the transfer of the AMP portion of ATP to flavin mononucleotide (FMN) to produce flavin adenine dinucleotide (FAD) coenzyme. This is FAD synthase from Halalkalicoccus jeotgali (strain DSM 18796 / CECT 7217 / JCM 14584 / KCTC 4019 / B3).